The following is a 408-amino-acid chain: Phosphoglycerate kinase (408 aa).

Substrate-binding positions include 22–24, arginine 39, 60–63, arginine 117, and arginine 157; these read DIN and HQSR. ATP contacts are provided by residues glutamate 332 and 358 to 361; that span reads GGHT.

The protein belongs to the phosphoglycerate kinase family. As to quaternary structure, monomer.

The protein resides in the cytoplasm. The catalysed reaction is (2R)-3-phosphoglycerate + ATP = (2R)-3-phospho-glyceroyl phosphate + ADP. It functions in the pathway carbohydrate degradation; glycolysis; pyruvate from D-glyceraldehyde 3-phosphate: step 2/5. This chain is Phosphoglycerate kinase (pgk), found in Thermoplasma acidophilum (strain ATCC 25905 / DSM 1728 / JCM 9062 / NBRC 15155 / AMRC-C165).